An 872-amino-acid polypeptide reads, in one-letter code: DNA mismatch repair protein MutS (872 aa).

Residue 602–609 (GPNMSGKS) coordinates ATP.

It belongs to the DNA mismatch repair MutS family.

This protein is involved in the repair of mismatches in DNA. It is possible that it carries out the mismatch recognition step. This protein has a weak ATPase activity. This is DNA mismatch repair protein MutS from Staphylococcus aureus (strain Mu3 / ATCC 700698).